Here is a 174-residue protein sequence, read N- to C-terminus: C-type lectin domain family 2 member A (174 aa).

Residues 1-27 (MINPELRDGRADGFIHRIVPKLIQNWK) are Cytoplasmic-facing. A helical; Signal-anchor for type II membrane protein transmembrane segment spans residues 28–48 (IGLMCFLSIIITTVCIIMIAT). Residues 49–174 (WSKHAKPVAC…WICSKPKYFL (126 aa)) are Extracellular-facing. Residues Cys58 and Cys69 are joined by a disulfide bond. A C-type lectin domain is found at 65–174 (VRDKCFYFSD…WICSKPKYFL (110 aa)). 3 N-linked (GlcNAc...) asparagine glycosylation sites follow: Asn78, Asn130, and Asn143. Cys86 and Cys167 form a disulfide bridge.

In terms of assembly, homodimer; non-disulfide-linked. Interacts with KLRB1. Interacts with KLRF2. Post-translationally, N-glycosylated. As to expression, mainly expressed in skin. Also expressed in keratinocytes, spleen, thymus, small intestine, peripheral blood monocytes, bone marrow, ovary, testis and skin. High expression in CD8(+), B-lymphocytes and naive CD4(+) T-cells. Restricted mostly to proliferating lymphocytes. Not detected in myeloid leukocytes or natural killer (NK) cells.

The protein localises to the cell membrane. Functionally, membrane-bound protein expressed mainly on keratinocytes which acts as a ligand to stimulate the activating receptor NKp65/KLRF2, expressed on the surface of natural killer (NK) cells. Facilitates thereby dedicated immune recognition of keratinocytes leading to natural killer cell mediated cytotoxicity. Also plays a role in modulating the extent of T-cell expansion. The sequence is that of C-type lectin domain family 2 member A (CLEC2A) from Homo sapiens (Human).